The following is a 381-amino-acid chain: Putative acyl-CoA dehydrogenase YdbM (381 aa).

FAD-binding positions include 158–160 and 337–341; these read FTT and RIVGA.

Belongs to the acyl-CoA dehydrogenase family. FAD is required as a cofactor.

The polypeptide is Putative acyl-CoA dehydrogenase YdbM (ydbM) (Bacillus subtilis (strain 168)).